The following is a 373-amino-acid chain: Putative C-P lyase subunit protein HtxH (373 aa).

The protein belongs to the PhnI family.

Functionally, belongs to an operon involved in hypophosphite oxidation. Exact function not known. This is Putative C-P lyase subunit protein HtxH (htxH) from Stutzerimonas stutzeri (Pseudomonas stutzeri).